A 434-amino-acid polypeptide reads, in one-letter code: Ribosomal protein uS12 methylthiotransferase RimO (434 aa).

The MTTase N-terminal domain occupies 6–122 (SKLYLLTLGC…IIAELGGHYK (117 aa)). Residues Cys-15, Cys-51, Cys-85, Cys-146, Cys-150, and Cys-153 each coordinate [4Fe-4S] cluster. The 230-residue stretch at 132-361 (LTPPYFSYLK…MAAQEEIAYA (230 aa)) folds into the Radical SAM core domain. Positions 364 to 434 (QALVGSFMPV…AFDLFGSLVL (71 aa)) constitute a TRAM domain.

The protein belongs to the methylthiotransferase family. RimO subfamily. [4Fe-4S] cluster is required as a cofactor.

It localises to the cytoplasm. It carries out the reaction L-aspartate(89)-[ribosomal protein uS12]-hydrogen + (sulfur carrier)-SH + AH2 + 2 S-adenosyl-L-methionine = 3-methylsulfanyl-L-aspartate(89)-[ribosomal protein uS12]-hydrogen + (sulfur carrier)-H + 5'-deoxyadenosine + L-methionine + A + S-adenosyl-L-homocysteine + 2 H(+). Catalyzes the methylthiolation of an aspartic acid residue of ribosomal protein uS12. The sequence is that of Ribosomal protein uS12 methylthiotransferase RimO from Chloroherpeton thalassium (strain ATCC 35110 / GB-78).